Consider the following 448-residue polypeptide: uncharacterized protein (448 aa).

An ATP-binding site is contributed by 257–264 (GRNAQGKT).

This is an uncharacterized protein from Methanocaldococcus jannaschii (strain ATCC 43067 / DSM 2661 / JAL-1 / JCM 10045 / NBRC 100440) (Methanococcus jannaschii).